A 348-amino-acid chain; its full sequence is MSNCELTVLKPAEVKLSPRDREGIINPMYDCQPAGAQYAGIGIKDCIPLVHGGQGCTMFVRLLFAQHFKENFDVASTSLHEESAVFGGAKRVEEGVLVLARRYPNLRVIPIITTCSTEVIGDDIEGTINVCNRALATEFPERKIHLAPVHTPSLKGSHVTGYAECVKSVFKTISDAHGKGQPSGKLNVFPGWVNPGDVVLLKRYFKEMGVDANIYMDTEDFDSPMLPNKSIETHGRTTVEDIADSANALGTLALARYEGATTGDLLQKTFQVPNHLVNTPYGIKNTDDMLRKIAEVTGKEIPESLVKERGIALDALADLAHMFFANKKVAIFGHPDLVLGLAQFCLEV.

[8Fe-7S] cluster contacts are provided by cysteine 31, cysteine 56, cysteine 115, and serine 153.

Belongs to the NifD/NifK/NifE/NifN family. In terms of assembly, hexamer of two alpha, two beta, and two delta chains. [8Fe-7S] cluster is required as a cofactor.

The catalysed reaction is N2 + 8 reduced [2Fe-2S]-[ferredoxin] + 16 ATP + 16 H2O = H2 + 8 oxidized [2Fe-2S]-[ferredoxin] + 2 NH4(+) + 16 ADP + 16 phosphate + 6 H(+). Functionally, this vanadium-iron protein is part of the nitrogenase complex that catalyzes the key enzymatic reactions in nitrogen fixation. The chain is Nitrogenase vanadium-iron protein beta chain (vnfK) from Azotobacter salinestris.